Consider the following 497-residue polypeptide: MNGYFRLIAAFALGVATVSGFAPFYLYPIPVVTLALLALLWRRSRTPGQAALTGFTFGMGLFGAGVTWLYVSLHDFGHMEPALAVLALIILCAYLALFPALTGWITAFRHFRASWAWPGMVAALWALAEWLRGTLFTGFPWLTVGYSQAPASPLAGFAPVIGVYGLSLLLMLSAAWLACWLENRQSHRFWLGLGSVWLIGFGLQQIHWTQPEGEPVTVSLLQGNIPQNMKWQPEHLAATMQIYAELVQESPSRLIVTPEISFPLFYEQAPQDYLALLAEHARSRQGDLLIGMAERSSSDNGYYNTMFSFGTSPEQSYRKYHLVPFGEYIPLKPVFGWIIDVLHIPLSDFSRGGLDQQPLDLAGQQVAVNICYEDVFGEEIIMQLPQASLLVNVSNDAWFGRSIGPRQHLQISQMRALETGRYMLRATNTGVTAIIDERGRVLEQLDMFTTAGLHSTAQGFGGATPYVRFGNSLVFALIGLLLLAGSLAAFSGRRKTL.

6 helical membrane passes run 21–41 (FAPF…ALLW), 51–71 (ALTG…WLYV), 85–105 (VLAL…TGWI), 119–139 (GMVA…FTGF), 157–177 (FAPV…AAWL), and 189–209 (FWLG…IHWT). One can recognise a CN hydrolase domain in the interval 221-461 (LQGNIPQNMK…GLHSTAQGFG (241 aa)). Glu-259 (proton acceptor) is an active-site residue. Residue Lys-319 is part of the active site. Residue Cys-371 is the Nucleophile of the active site. Residues 472–492 (SLVFALIGLLLLAGSLAAFSG) form a helical membrane-spanning segment.

It belongs to the CN hydrolase family. Apolipoprotein N-acyltransferase subfamily.

It is found in the cell inner membrane. It carries out the reaction N-terminal S-1,2-diacyl-sn-glyceryl-L-cysteinyl-[lipoprotein] + a glycerophospholipid = N-acyl-S-1,2-diacyl-sn-glyceryl-L-cysteinyl-[lipoprotein] + a 2-acyl-sn-glycero-3-phospholipid + H(+). Its pathway is protein modification; lipoprotein biosynthesis (N-acyl transfer). Catalyzes the phospholipid dependent N-acylation of the N-terminal cysteine of apolipoprotein, the last step in lipoprotein maturation. This chain is Apolipoprotein N-acyltransferase, found in Nitrosomonas europaea (strain ATCC 19718 / CIP 103999 / KCTC 2705 / NBRC 14298).